We begin with the raw amino-acid sequence, 382 residues long: Galactokinase (382 aa).

Position 34-37 (34-37) interacts with substrate; it reads EHTD. 124–130 is an ATP binding site; that stretch reads GAGLSSS. 2 residues coordinate Mg(2+): S130 and E162. Catalysis depends on D174, which acts as the Proton acceptor. A substrate-binding site is contributed by Y223.

It belongs to the GHMP kinase family. GalK subfamily.

The protein localises to the cytoplasm. The catalysed reaction is alpha-D-galactose + ATP = alpha-D-galactose 1-phosphate + ADP + H(+). The protein operates within carbohydrate metabolism; galactose metabolism. Functionally, catalyzes the transfer of the gamma-phosphate of ATP to D-galactose to form alpha-D-galactose-1-phosphate (Gal-1-P). The polypeptide is Galactokinase (Escherichia coli O7:K1 (strain IAI39 / ExPEC)).